Consider the following 311-residue polypeptide: tRNA-cytidine(32) 2-sulfurtransferase (311 aa).

Positions 47-52 (SGGKDS) match the PP-loop motif motif. The [4Fe-4S] cluster site is built by Cys122, Cys125, and Cys213.

The protein belongs to the TtcA family. As to quaternary structure, homodimer. It depends on Mg(2+) as a cofactor. Requires [4Fe-4S] cluster as cofactor.

The protein resides in the cytoplasm. The enzyme catalyses cytidine(32) in tRNA + S-sulfanyl-L-cysteinyl-[cysteine desulfurase] + AH2 + ATP = 2-thiocytidine(32) in tRNA + L-cysteinyl-[cysteine desulfurase] + A + AMP + diphosphate + H(+). Its pathway is tRNA modification. Functionally, catalyzes the ATP-dependent 2-thiolation of cytidine in position 32 of tRNA, to form 2-thiocytidine (s(2)C32). The sulfur atoms are provided by the cysteine/cysteine desulfurase (IscS) system. This Shigella boydii serotype 18 (strain CDC 3083-94 / BS512) protein is tRNA-cytidine(32) 2-sulfurtransferase.